The chain runs to 1297 residues: DNA-directed RNA polymerase subunit beta' (1297 aa).

Zn(2+)-binding residues include cysteine 60, cysteine 62, cysteine 75, and cysteine 78. Positions 535, 537, and 539 each coordinate Mg(2+). Positions 883, 961, 968, and 971 each coordinate Zn(2+).

Belongs to the RNA polymerase beta' chain family. In terms of assembly, the RNAP catalytic core consists of 2 alpha, 1 beta, 1 beta' and 1 omega subunit. When a sigma factor is associated with the core the holoenzyme is formed, which can initiate transcription. It depends on Mg(2+) as a cofactor. Zn(2+) serves as cofactor.

The catalysed reaction is RNA(n) + a ribonucleoside 5'-triphosphate = RNA(n+1) + diphosphate. Functionally, DNA-dependent RNA polymerase catalyzes the transcription of DNA into RNA using the four ribonucleoside triphosphates as substrates. The chain is DNA-directed RNA polymerase subunit beta' from Salinispora arenicola (strain CNS-205).